The following is a 225-amino-acid chain: ATP-dependent dethiobiotin synthetase BioD (225 aa).

12 to 17 (GVGKTV) serves as a coordination point for ATP. A Mg(2+)-binding site is contributed by threonine 16. The active site involves lysine 37. Threonine 41 contacts substrate. Residues aspartate 49, 108–111 (EGAG), and 197–199 (PAG) each bind ATP. Aspartate 49 and glutamate 108 together coordinate Mg(2+).

The protein belongs to the dethiobiotin synthetase family. Homodimer. Requires Mg(2+) as cofactor.

The protein resides in the cytoplasm. The enzyme catalyses (7R,8S)-7,8-diammoniononanoate + CO2 + ATP = (4R,5S)-dethiobiotin + ADP + phosphate + 3 H(+). It participates in cofactor biosynthesis; biotin biosynthesis; biotin from 7,8-diaminononanoate: step 1/2. In terms of biological role, catalyzes a mechanistically unusual reaction, the ATP-dependent insertion of CO2 between the N7 and N8 nitrogen atoms of 7,8-diaminopelargonic acid (DAPA, also called 7,8-diammoniononanoate) to form a ureido ring. The sequence is that of ATP-dependent dethiobiotin synthetase BioD from Mycolicibacterium smegmatis (strain ATCC 700084 / mc(2)155) (Mycobacterium smegmatis).